The following is a 391-amino-acid chain: Probable acridone synthase 3 (391 aa).

Residue cysteine 164 is part of the active site.

This sequence belongs to the thiolase-like superfamily. Chalcone/stilbene synthases family.

It catalyses the reaction N-methylanthraniloyl-CoA + 3 malonyl-CoA + 3 H(+) = 1,3-dihydroxy-N-methylacridone + 3 CO2 + 4 CoA + H2O. The polypeptide is Probable acridone synthase 3 (ACS3) (Ruta graveolens (Common rue)).